Here is a 291-residue protein sequence, read N- to C-terminus: Aspartate carbamoyltransferase catalytic subunit (291 aa).

2 residues coordinate carbamoyl phosphate: Arg49 and Thr50. An L-aspartate-binding site is contributed by Lys77. Carbamoyl phosphate is bound by residues Arg99, His127, and Gln130. Positions 160 and 210 each coordinate L-aspartate. Residues Gly249 and Pro250 each coordinate carbamoyl phosphate.

The protein belongs to the aspartate/ornithine carbamoyltransferase superfamily. ATCase family. Heterododecamer (2C3:3R2) of six catalytic PyrB chains organized as two trimers (C3), and six regulatory PyrI chains organized as three dimers (R2).

The enzyme catalyses carbamoyl phosphate + L-aspartate = N-carbamoyl-L-aspartate + phosphate + H(+). The protein operates within pyrimidine metabolism; UMP biosynthesis via de novo pathway; (S)-dihydroorotate from bicarbonate: step 2/3. Catalyzes the condensation of carbamoyl phosphate and aspartate to form carbamoyl aspartate and inorganic phosphate, the committed step in the de novo pyrimidine nucleotide biosynthesis pathway. In Sulfurimonas denitrificans (strain ATCC 33889 / DSM 1251) (Thiomicrospira denitrificans (strain ATCC 33889 / DSM 1251)), this protein is Aspartate carbamoyltransferase catalytic subunit.